The sequence spans 709 residues: UvrABC system protein B (709 aa).

In terms of domain architecture, Helicase ATP-binding spans 35 to 416; it reads ERVEAGEKDV…YELGQADGYV (382 aa). 48–55 lines the ATP pocket; the sequence is GATGTGKS. The short motif at 101–124 is the Beta-hairpin element; that stretch reads YYDYYQPEAYVPQTDTFIEKDSSI. Residues 438 to 604 form the Helicase C-terminal domain; sequence QIDDLLEQIR…PLRKRIADIT (167 aa). The 36-residue stretch at 666–701 folds into the UVR domain; it reads ADLIEQMSQQMHQAAADLQFELAARLRDEVGELKKE.

Belongs to the UvrB family. Forms a heterotetramer with UvrA during the search for lesions. Interacts with UvrC in an incision complex.

It is found in the cytoplasm. The UvrABC repair system catalyzes the recognition and processing of DNA lesions. A damage recognition complex composed of 2 UvrA and 2 UvrB subunits scans DNA for abnormalities. Upon binding of the UvrA(2)B(2) complex to a putative damaged site, the DNA wraps around one UvrB monomer. DNA wrap is dependent on ATP binding by UvrB and probably causes local melting of the DNA helix, facilitating insertion of UvrB beta-hairpin between the DNA strands. Then UvrB probes one DNA strand for the presence of a lesion. If a lesion is found the UvrA subunits dissociate and the UvrB-DNA preincision complex is formed. This complex is subsequently bound by UvrC and the second UvrB is released. If no lesion is found, the DNA wraps around the other UvrB subunit that will check the other stand for damage. The chain is UvrABC system protein B from Micrococcus luteus (strain ATCC 4698 / DSM 20030 / JCM 1464 / CCM 169 / CCUG 5858 / IAM 1056 / NBRC 3333 / NCIMB 9278 / NCTC 2665 / VKM Ac-2230) (Micrococcus lysodeikticus).